Consider the following 301-residue polypeptide: Formylmethanofuran--tetrahydromethanopterin formyltransferase-like protein (301 aa).

This sequence belongs to the FTR family.

The sequence is that of Formylmethanofuran--tetrahydromethanopterin formyltransferase-like protein from Archaeoglobus fulgidus (strain ATCC 49558 / DSM 4304 / JCM 9628 / NBRC 100126 / VC-16).